Here is a 506-residue protein sequence, read N- to C-terminus: Alpha-L-fucosidase 1 (506 aa).

Residues Met-1–Ser-23 form the signal peptide. 6 N-linked (GlcNAc...) asparagine glycosylation sites follow: Asn-22, Asn-82, Asn-248, Asn-320, Asn-355, and Asn-487.

Belongs to the glycosyl hydrolase 29 family.

The protein localises to the secreted. It is found in the extracellular space. The protein resides in the apoplast. The catalysed reaction is an alpha-L-fucoside + H2O = L-fucose + an alcohol. In terms of biological role, hydrolyzes both 3- and 4-linked fucoses in Lewis determinants. Not active on neither 2-linked fucose nor on fucose in alpha-1,3-linkage to the innermost GlcNAc. The polypeptide is Alpha-L-fucosidase 1 (FUC1) (Arabidopsis thaliana (Mouse-ear cress)).